Here is a 346-residue protein sequence, read N- to C-terminus: Immunoglobulin heavy constant alpha (346 aa).

Ig-like domains lie at 6–96 (PSIF…KSVD), 118–212 (PRLS…VSIT), and 221–323 (PQVH…KSID). The cysteines at positions 26 and 83 are disulfide-linked. N134 carries N-linked (GlcNAc...) (complex) asparagine glycosylation. 2 cysteine pairs are disulfide-bonded: C139–C196 and C243–C306. Residue N333 is glycosylated (N-linked (GlcNAc...) (complex) asparagine).

As to quaternary structure, immunoglobulins are composed of two identical heavy chains and two identical light chains; disulfide-linked. Monomeric or polymeric. Part of the secretory IgA (sIgA) complex that consists of two, four or five IgA monomers, and two additional non-Ig polypeptides, namely the JCHAIN and the secretory component (the proteolytic product of PIGR). Post-translationally, N-glycosylated. N-glycans attached to Asn-134 varies from differentially fucosylated complex and hybrid to sialylated with N-glycoyl neuraminic acid types: GlcNAc2Man3GlcNAc2(Fuc); GlcNAc1Man4GlcNAc2(Fuc); GlcNAc1Man4GlcNAc2; Gal1GlcNAc2Man3GlcNAc2(Fuc); GlcNAc2Man3GlcNAc2; Gal1GlcNAc2Man3GlcNAc2; GlcNAc1Man3GlcNAc2; GlcNAc1Man2GlcNAc2 and NeuGc1Gal1GlcNAc2Man3GlcNAc2(Fuc). N-glycans attached to Asn-333 are mainly fucosylated complex types: GlcNAc2Man3GlcNAc2; GlcNAc1Man3GlcNAc2; GlcNAc1Man3GlcNAc2(Fuc); GlcNAc2Man3GlcNAc2(Fuc); Gal1GlcNAc2Man3GlcNAc2(Fuc); NeuGc1Gal1GlcNAc1Man3GlcNAc2(Fuc); NeuGc1Gal1GlcNAc2Man3GlcNAc2(Fuc) and NeuAc1Gal1GlcNAc2Man3GlcNAc2(Fuc).

The protein localises to the secreted. The protein resides in the cell membrane. Its function is as follows. Constant region of immunoglobulin heavy chains. Immunoglobulins, also known as antibodies, are membrane-bound or secreted glycoproteins produced by B lymphocytes. In the recognition phase of humoral immunity, the membrane-bound immunoglobulins serve as receptors which, upon binding of a specific antigen, trigger the clonal expansion and differentiation of B lymphocytes into immunoglobulins-secreting plasma cells. Secreted immunoglobulins mediate the effector phase of humoral immunity, which results in the elimination of bound antigens. The antigen binding site is formed by the variable domain of one heavy chain, together with that of its associated light chain. Thus, each immunoglobulin has two antigen binding sites with remarkable affinity for a particular antigen. The variable domains are assembled by a process called V-(D)-J rearrangement and can then be subjected to somatic hypermutations which, after exposure to antigen and selection, allow affinity maturation for a particular antigen. Ig alpha is the major immunoglobulin class in body secretions. This chain is Immunoglobulin heavy constant alpha (IGHA), found in Equus asinus (Donkey).